The sequence spans 168 residues: Desumoylating isopeptidase 1 (168 aa).

Positions 7 to 149 constitute a PPPDE domain; sequence YPVKLYVYDL…FGQALRPLLD (143 aa). Histidine 38 is a catalytic residue. The Nuclear export signal 1 motif lies at 83–91; it reads IFLEYLSSL. The active site involves cysteine 108. A Nuclear export signal 2 motif is present at residues 139–153; the sequence is PFGQALRPLLDSIQI.

This sequence belongs to the DeSI family. In terms of assembly, homodimer. Interacts with UBQLN4; leading to the export of UBQLN4 from the nucleus.

The protein localises to the cytoplasm. It is found in the nucleus. It carries out the reaction S-hexadecanoyl-L-cysteinyl-[protein] + H2O = L-cysteinyl-[protein] + hexadecanoate + H(+). With respect to regulation, palmostatin B inhibits its palmitoyl protein thioesterase activity. Its function is as follows. Protease which deconjugates SUMO1, SUMO2 and SUMO3 from some substrate proteins. Has isopeptidase but not SUMO-processing activity. Desumoylates ZBTB46. Collaborates with UBQLN4 in the export of ubiquitinated proteins from the nucleus to the cytoplasm. Exhibits palmitoyl protein thioesterase (S-depalmitoylation) activity towards synthetic substrates 4-methylumbelliferyl-6-S-palmitoyl-beta-D-glucopyranoside and S-depalmitoylation probe 5 (DPP-5). The protein is Desumoylating isopeptidase 1 of Homo sapiens (Human).